A 375-amino-acid polypeptide reads, in one-letter code: 23S rRNA (uracil(747)-C(5))-methyltransferase RlmC (375 aa).

[4Fe-4S] cluster-binding residues include cysteine 3, cysteine 11, cysteine 14, and cysteine 87. S-adenosyl-L-methionine is bound by residues glutamine 212, phenylalanine 241, glutamate 262, and asparagine 307. Cysteine 334 acts as the Nucleophile in catalysis.

Belongs to the class I-like SAM-binding methyltransferase superfamily. RNA M5U methyltransferase family. RlmC subfamily.

The enzyme catalyses uridine(747) in 23S rRNA + S-adenosyl-L-methionine = 5-methyluridine(747) in 23S rRNA + S-adenosyl-L-homocysteine + H(+). Its function is as follows. Catalyzes the formation of 5-methyl-uridine at position 747 (m5U747) in 23S rRNA. The protein is 23S rRNA (uracil(747)-C(5))-methyltransferase RlmC of Salmonella dublin (strain CT_02021853).